We begin with the raw amino-acid sequence, 600 residues long: Long-chain-fatty-acid--CoA ligase FadD15 (600 aa).

Belongs to the ATP-dependent AMP-binding enzyme family.

The catalysed reaction is a long-chain fatty acid + ATP + CoA = a long-chain fatty acyl-CoA + AMP + diphosphate. It participates in lipid metabolism; fatty acid biosynthesis. Its function is as follows. Catalyzes the activation of long-chain fatty acids as acyl-coenzyme A (acyl-CoA), which are then transferred to the multifunctional polyketide synthase (PKS) type III for further chain extension. The protein is Long-chain-fatty-acid--CoA ligase FadD15 (fadD15) of Mycobacterium bovis (strain ATCC BAA-935 / AF2122/97).